Reading from the N-terminus, the 485-residue chain is Hydrogenase transcriptional regulatory protein HoxA (485 aa).

A Response regulatory domain is found at 6-120 (TILVVDDEVR…QLVETVKEAV (115 aa)). D54 carries the post-translational modification 4-aspartylphosphate. Positions 166-392 (STESPMHAVI…ELQNEIQRMA (227 aa)) constitute a Sigma-54 factor interaction domain. ATP is bound by residues 192–199 (GESGTGKE) and 264–273 (EIGETSPAFQ). Positions 404 to 426 (PLLGRRNGKRSAPLPAHGRLNGS) are disordered. The H-T-H motif DNA-binding region spans 451-470 (NISRVASELGLSRVGLRNKL).

The protein localises to the cytoplasm. Probable member of the two-component regulatory system involved in the regulation of the hydrogenase activity. HoxA is probably phosphorylated by a sensory component (which could be HoxX) and then acts in conjunction with sigma-54 as a transcriptional activator. This chain is Hydrogenase transcriptional regulatory protein HoxA (hoxA), found in Bradyrhizobium diazoefficiens (strain JCM 10833 / BCRC 13528 / IAM 13628 / NBRC 14792 / USDA 110).